Consider the following 164-residue polypeptide: Large ribosomal subunit protein uL15 (164 aa).

The span at 1–14 shows a compositional bias: polar residues; the sequence is MKLNEIQDNPGSSK. A disordered region spans residues 1–35; it reads MKLNEIQDNPGSSKSRMRVGRGIGSGKGKTCGRGV. Residues 21-35 show a composition bias toward gly residues; the sequence is RGIGSGKGKTCGRGV.

The protein belongs to the universal ribosomal protein uL15 family. Part of the 50S ribosomal subunit.

Binds to the 23S rRNA. The protein is Large ribosomal subunit protein uL15 of Methylocella silvestris (strain DSM 15510 / CIP 108128 / LMG 27833 / NCIMB 13906 / BL2).